The following is a 295-amino-acid chain: Ribosomal RNA small subunit methyltransferase A (295 aa).

S-adenosyl-L-methionine is bound by residues Asn-28, Leu-30, Gly-55, Glu-76, Asp-101, and Asn-131.

This sequence belongs to the class I-like SAM-binding methyltransferase superfamily. rRNA adenine N(6)-methyltransferase family. RsmA subfamily.

It is found in the cytoplasm. It carries out the reaction adenosine(1518)/adenosine(1519) in 16S rRNA + 4 S-adenosyl-L-methionine = N(6)-dimethyladenosine(1518)/N(6)-dimethyladenosine(1519) in 16S rRNA + 4 S-adenosyl-L-homocysteine + 4 H(+). Functionally, specifically dimethylates two adjacent adenosines (A1518 and A1519) in the loop of a conserved hairpin near the 3'-end of 16S rRNA in the 30S particle. May play a critical role in biogenesis of 30S subunits. The polypeptide is Ribosomal RNA small subunit methyltransferase A (Pelotomaculum thermopropionicum (strain DSM 13744 / JCM 10971 / SI)).